A 353-amino-acid chain; its full sequence is UPF0283 membrane protein YcjF (353 aa).

Residues 1–19 (MSEPLKPRIDFAEPLKEEP) are compositionally biased toward basic and acidic residues. Residues 1–35 (MSEPLKPRIDFAEPLKEEPTSAFKAQQTFSEAESR) are disordered. Topologically, residues 1–69 (MSEPLKPRID…LRPKRSLWRK (69 aa)) are periplasmic. The chain crosses the membrane as a helical span at residues 70–90 (MVMGGLALFGASVVGQGVQWT). Residues 91 to 99 (MNAWQTQDW) lie on the Cytoplasmic side of the membrane. Residues 100 to 120 (VALGGCAAGALIVGAGVGSVV) traverse the membrane as a helical segment. Residues 121 to 212 (TEWRRLWRLR…ARREISRFAA (92 aa)) lie on the Periplasmic side of the membrane. Residues 213–233 (ESTLMIAVSPLALVDMAFIAW) form a helical membrane-spanning segment. Over 234–353 (RNLRLINRIA…LQKSKSSPEK (120 aa)) the chain is Cytoplasmic.

This sequence belongs to the UPF0283 family.

Its subcellular location is the cell inner membrane. This is UPF0283 membrane protein YcjF (ycjF) from Salmonella typhimurium (strain LT2 / SGSC1412 / ATCC 700720).